Reading from the N-terminus, the 98-residue chain is Large ribosomal subunit protein uL23 (98 aa).

This sequence belongs to the universal ribosomal protein uL23 family. As to quaternary structure, part of the 50S ribosomal subunit. Contacts protein L29, and trigger factor when it is bound to the ribosome.

Its function is as follows. One of the early assembly proteins it binds 23S rRNA. One of the proteins that surrounds the polypeptide exit tunnel on the outside of the ribosome. Forms the main docking site for trigger factor binding to the ribosome. This is Large ribosomal subunit protein uL23 from Clostridium botulinum (strain Eklund 17B / Type B).